We begin with the raw amino-acid sequence, 342 residues long: Phosphoribosylformylglycinamidine cyclo-ligase (342 aa).

It belongs to the AIR synthase family.

It localises to the cytoplasm. It catalyses the reaction 2-formamido-N(1)-(5-O-phospho-beta-D-ribosyl)acetamidine + ATP = 5-amino-1-(5-phospho-beta-D-ribosyl)imidazole + ADP + phosphate + H(+). The protein operates within purine metabolism; IMP biosynthesis via de novo pathway; 5-amino-1-(5-phospho-D-ribosyl)imidazole from N(2)-formyl-N(1)-(5-phospho-D-ribosyl)glycinamide: step 2/2. This chain is Phosphoribosylformylglycinamidine cyclo-ligase, found in Staphylococcus aureus (strain bovine RF122 / ET3-1).